The following is a 201-amino-acid chain: Holliday junction branch migration complex subunit RuvA (201 aa).

The tract at residues 1–64 (MIGFIRGLLV…EDAHSLFGFG (64 aa)) is domain I. The segment at 65–143 (TEAERGLFRS…IGVPSLAPAS (79 aa)) is domain II. The interval 144-153 (FAGGAAPLPA) is flexible linker. The segment at 153-201 (AADPADEAVSALIALGFKPQEANTLVARQAAEGRSAEDLIRAALQSAVR) is domain III.

This sequence belongs to the RuvA family. In terms of assembly, homotetramer. Forms an RuvA(8)-RuvB(12)-Holliday junction (HJ) complex. HJ DNA is sandwiched between 2 RuvA tetramers; dsDNA enters through RuvA and exits via RuvB. An RuvB hexamer assembles on each DNA strand where it exits the tetramer. Each RuvB hexamer is contacted by two RuvA subunits (via domain III) on 2 adjacent RuvB subunits; this complex drives branch migration. In the full resolvosome a probable DNA-RuvA(4)-RuvB(12)-RuvC(2) complex forms which resolves the HJ.

Its subcellular location is the cytoplasm. In terms of biological role, the RuvA-RuvB-RuvC complex processes Holliday junction (HJ) DNA during genetic recombination and DNA repair, while the RuvA-RuvB complex plays an important role in the rescue of blocked DNA replication forks via replication fork reversal (RFR). RuvA specifically binds to HJ cruciform DNA, conferring on it an open structure. The RuvB hexamer acts as an ATP-dependent pump, pulling dsDNA into and through the RuvAB complex. HJ branch migration allows RuvC to scan DNA until it finds its consensus sequence, where it cleaves and resolves the cruciform DNA. This Methylococcus capsulatus (strain ATCC 33009 / NCIMB 11132 / Bath) protein is Holliday junction branch migration complex subunit RuvA.